The following is a 276-amino-acid chain: Rhomboid protease GlpG (276 aa).

Transmembrane regions (helical) follow at residues 94–114 (GPVT…MQIL), 142–162 (ALMH…WYLG), 169–189 (LGSG…GYVQ), 192–212 (FSGP…GYVW), 229–249 (LIIF…GMSM), and 250–270 (ANGA…VDSL). Catalysis depends on Ser201, which acts as the Nucleophile. His254 is an active-site residue.

Belongs to the peptidase S54 family.

The protein resides in the cell inner membrane. It catalyses the reaction Cleaves type-1 transmembrane domains using a catalytic dyad composed of serine and histidine that are contributed by different transmembrane domains.. Rhomboid-type serine protease that catalyzes intramembrane proteolysis. The polypeptide is Rhomboid protease GlpG (Escherichia coli (strain 55989 / EAEC)).